The following is a 182-amino-acid chain: Inner membrane-spanning protein YciB (182 aa).

5 helical membrane-spanning segments follow: residues 22–42, 53–73, 76–96, 121–141, and 149–169; these read IYAA…VVWV, ITLV…NEAF, WKVT…QFLF, FSWG…AFYL, and FKVF…GIYI.

Belongs to the YciB family.

It localises to the cell inner membrane. Plays a role in cell envelope biogenesis, maintenance of cell envelope integrity and membrane homeostasis. In Tolumonas auensis (strain DSM 9187 / NBRC 110442 / TA 4), this protein is Inner membrane-spanning protein YciB.